Here is a 160-residue protein sequence, read N- to C-terminus: AP-1 complex subunit sigma-2 (160 aa).

This sequence belongs to the adaptor complexes small subunit family. Adaptor protein complex 1 (AP-1) is a heterotetramer composed of two large adaptins (gamma-type subunit AP1G1 and beta-type subunit AP1B1), a medium adaptin (mu-type subunit AP1M1 or AP1M2) and a small adaptin (sigma-type subunit AP1S1 or AP1S2 or AP1S3). Binds to MUC1. In terms of tissue distribution, widely expressed.

The protein localises to the golgi apparatus. Its subcellular location is the cytoplasmic vesicle membrane. It is found in the membrane. It localises to the clathrin-coated pit. In terms of biological role, subunit of clathrin-associated adaptor protein complex 1 that plays a role in protein sorting in the late-Golgi/trans-Golgi network (TGN) and/or endosomes. The AP complexes mediate both the recruitment of clathrin to membranes and the recognition of sorting signals within the cytosolic tails of transmembrane cargo molecules. This is AP-1 complex subunit sigma-2 (Ap1s2) from Mus musculus (Mouse).